Here is a 709-residue protein sequence, read N- to C-terminus: Myotubularin-related protein 11 (709 aa).

Positions 1-39 (MWWGGRGQSFNIAPQKEEPEMGSVQENRMPEPRSRQPSS) are disordered. The Myotubularin phosphatase domain occupies 196–639 (METAEDWETE…PQIRLWRRCY (444 aa)).

It belongs to the protein-tyrosine phosphatase family. Non-receptor class myotubularin subfamily. In terms of tissue distribution, expressed in bone marrow, spleen and thymus.

The polypeptide is Myotubularin-related protein 11 (MTMR11) (Homo sapiens (Human)).